Here is a 365-residue protein sequence, read N- to C-terminus: L-lactate oxidase (365 aa).

The FMN hydroxy acid dehydrogenase domain maps to 6 to 365 (RIPPGVWNAI…ITHDTLTPSC (360 aa)). A pyruvate-binding site is contributed by Tyr32. FMN contacts are provided by residues 85–87 (PVA), Ser114, and Gln135. Residue Tyr137 coordinates pyruvate. Residues Thr163, Lys237, and Ser259 each coordinate FMN. Pyruvate-binding residues include His261 and Arg264. His261 (proton acceptor) is an active-site residue. FMN is bound by residues 292–296 (DGGVR) and Arg316.

It belongs to the FMN-dependent alpha-hydroxy acid dehydrogenase family. Homotetramer. It depends on FMN as a cofactor.

It carries out the reaction (S)-lactate + O2 = pyruvate + H2O2. The enzyme catalyses glycolate + O2 = glyoxylate + H2O2. Functionally, catalyzes the oxidation of (S)-lactate (L-lactate) to pyruvate, with a reduction of O2 to H2O2. To a lesser extent is also able to use glycolate as substrate. This Alicycliphilus denitrificans (strain DSM 14773 / CIP 107495 / K601) protein is L-lactate oxidase.